The sequence spans 80 residues: Lantibiotic Flvalpha.a (80 aa).

Residues 1–38 (MNKNPIYRSEEEAKDIACGNVAAELDENSQALDAINGA) constitute a propeptide, cleaved by FlvT. T43 and T47 each carry 2,3-didehydrobutyrine; by FlvM1. Positions 52 to 55 (TVGC) form a cross-link, beta-methyllanthionine (Thr-Cys); by FlvM1. The segment at residues 58–68 (SYGLGNGGYCC) is a cross-link (lanthionine (Ser-Cys); by FlvM1). 2 consecutive cross-links (beta-methyllanthionine (Thr-Cys); by FlvM1) follow at residues 69 to 74 (TYTVEC) and 71 to 78 (TVECSKTC).

The lanthionine formed by Ser-58 and Cys-68 forms a putative lipid II binding motif. In terms of processing, maturation of FlvA1 peptides involves the enzymatic conversion of Thr, and Ser into dehydrated AA and the formation of thioether bonds with cysteines. Modifications are processed by the flavecin synthetase FlvM1. This is followed by membrane translocation and cleavage of the modified precursor. Post-translationally, contains DL-lanthionine and DL-beta-methyllanthionine, when coepressed in E.coli with the flavecin synthetase FlvM1.

The protein localises to the secreted. Lanthionine-containing peptide antibiotic (lantibiotic) only active on Gram-positive bacteria in synergy with Flvbeta peptides, which are encoded by the same operon than Flvalpha.a. Shows antibacterial activity in synergy with Flvbeta.b, Flvbeta.c, Flvbeta.e and Flvbeta.g. Does not show antibacterial activity when tested with Flvbeta.a, Flvbeta.d, Flvbeta.f and Flvbeta.h. The bactericidal activity of lantibiotics is based on depolarization of energized bacterial cytoplasmic membranes, initiated by the formation of aqueous transmembrane pores. The polypeptide is Lantibiotic Flvalpha.a (Ruminococcus flavefaciens).